Reading from the N-terminus, the 941-residue chain is Ankyrin repeat and MYND domain-containing protein 1 (941 aa).

MORN repeat units lie at residues 2–24 (YQGEFGLNMKLGYGKFSWPTGES), 25–47 (YHGQFYRDHCHGLGTYMWPDGSS), and 70–92 (FQGLYKADQRFGPGVETYPDGSQ). ANK repeat units follow at residues 292-321 (KGYTVLAAAATHCHNDIVNLLLDCGADVNK), 513-542 (MRRMALSMIERRKRWRTIKLLLRRGADPNL), 545-574 (VPMQVLFLAVKAGDVDGVRLLLEHGARTDI), 581-613 (STLTPLHIAAALPGEEGVQIVELLLHAITDVDA), 657-691 (GGRTALHMACEREDDNKCARDIVRLLLSHGANPNL), 694-723 (SGHSPLSLSIASGNELVVKELLTQGADPNL), and 737-766 (CDLTYEHQRNMDSKLALIDRLISHGADILK). The Zn(2+) site is built by C880, C883, C894, C897, C903, C907, H916, and C920. The MYND-type zinc-finger motif lies at 880 to 920 (CYQCGRSIGVRLLPCPRCYGILTCSKYCKTKAWTEFHKKDC).

This Homo sapiens (Human) protein is Ankyrin repeat and MYND domain-containing protein 1 (ANKMY1).